A 91-amino-acid chain; its full sequence is MARSIKKGPFVDAHLLKKVDAVRTSNDKRPIKTWSRRSTVLPDFVGLTIAVHNGRQHVPVFVSENMVGHKLGEFALTRTFKGHAASKKAKR.

Belongs to the universal ribosomal protein uS19 family.

Functionally, protein S19 forms a complex with S13 that binds strongly to the 16S ribosomal RNA. The chain is Small ribosomal subunit protein uS19 from Aromatoleum aromaticum (strain DSM 19018 / LMG 30748 / EbN1) (Azoarcus sp. (strain EbN1)).